A 127-amino-acid chain; its full sequence is Large ribosomal subunit protein uL22c (127 aa).

It belongs to the universal ribosomal protein uL22 family. Part of the 50S ribosomal subunit.

The protein resides in the plastid. Its subcellular location is the chloroplast. Its function is as follows. This protein binds specifically to 23S rRNA. Functionally, the globular domain of the protein is located near the polypeptide exit tunnel on the outside of the subunit, while an extended beta-hairpin is found that lines the wall of the exit tunnel in the center of the 70S ribosome. The chain is Large ribosomal subunit protein uL22c (rpl22) from Acorus calamus var. americanus (American sweet flag).